The primary structure comprises 72 residues: Translation initiation factor IF-1 (72 aa).

The S1-like domain maps to 1–72 (MAKEGAIEVE…TRGRIVYRYK (72 aa)).

The protein belongs to the IF-1 family. In terms of assembly, component of the 30S ribosomal translation pre-initiation complex which assembles on the 30S ribosome in the order IF-2 and IF-3, IF-1 and N-formylmethionyl-tRNA(fMet); mRNA recruitment can occur at any time during PIC assembly.

The protein resides in the cytoplasm. One of the essential components for the initiation of protein synthesis. Stabilizes the binding of IF-2 and IF-3 on the 30S subunit to which N-formylmethionyl-tRNA(fMet) subsequently binds. Helps modulate mRNA selection, yielding the 30S pre-initiation complex (PIC). Upon addition of the 50S ribosomal subunit IF-1, IF-2 and IF-3 are released leaving the mature 70S translation initiation complex. This Corynebacterium glutamicum (strain R) protein is Translation initiation factor IF-1.